Reading from the N-terminus, the 272-residue chain is Tryptophan synthase alpha chain (272 aa).

Residues Glu-49 and Glu-60 each act as proton acceptor in the active site.

The protein belongs to the TrpA family. Tetramer of two alpha and two beta chains.

It carries out the reaction (1S,2R)-1-C-(indol-3-yl)glycerol 3-phosphate + L-serine = D-glyceraldehyde 3-phosphate + L-tryptophan + H2O. The protein operates within amino-acid biosynthesis; L-tryptophan biosynthesis; L-tryptophan from chorismate: step 5/5. Functionally, the alpha subunit is responsible for the aldol cleavage of indoleglycerol phosphate to indole and glyceraldehyde 3-phosphate. This Legionella pneumophila (strain Lens) protein is Tryptophan synthase alpha chain.